We begin with the raw amino-acid sequence, 145 residues long: Protein SprT-like (145 aa).

Positions 4–141 (TDYVKEVSRQ…CGNCHGKLRH (138 aa)) constitute a SprT-like domain. A Zn(2+)-binding site is contributed by H64. The active site involves E65. Zn(2+) is bound at residue H68.

It belongs to the SprT family. Zn(2+) is required as a cofactor.

It is found in the cytoplasm. In Streptococcus mutans serotype c (strain ATCC 700610 / UA159), this protein is Protein SprT-like.